Consider the following 507-residue polypeptide: Cytochrome P450 4X1 (507 aa).

A helical transmembrane segment spans residues 14 to 34 (LHLALVFCLALVLMQAMKLYL). C452 is a binding site for heme.

It belongs to the cytochrome P450 family. Heme is required as a cofactor. Expressed in brain and aorta. In the brain, expressed in the Purkinje cells of the cerebellum, pyramidal neurons in the dentate gyrus of the hippocampus, cortical forebrain neurons and those of brain stem nuclei (at protein level). In addition to neurons, also expressed in cerebral vascular endothelial cells (at protein level). Also expressed in epithelial cells of the choroid plexus (at protein level). Hardly detectable in heart, lung, kidney and spleen.

Its subcellular location is the endoplasmic reticulum membrane. The protein resides in the microsome membrane. The enzyme catalyses N-(5Z,8Z,11Z,14Z-eicosatetraenoyl)-ethanolamine + reduced [NADPH--hemoprotein reductase] + O2 = N-(14,15-epoxy-5Z,8Z,11Z-eicosatrienoyl)-ethanolamine + oxidized [NADPH--hemoprotein reductase] + H2O + H(+). Its function is as follows. A cytochrome P450 monooxygenase that selectively catalyzes the epoxidation of the last double bond of the arachidonoyl moiety of anandamide, potentially modulating endocannabinoid signaling. Has no hydroxylase activity toward various fatty acids, steroids and prostaglandins. Mechanistically, uses molecular oxygen inserting one oxygen atom into a substrate, and reducing the second into a water molecule, with two electrons provided by NADPH via cytochrome P450 reductase (CPR; NADPH-ferrihemoprotein reductase). The sequence is that of Cytochrome P450 4X1 from Mus musculus (Mouse).